Consider the following 299-residue polypeptide: ATP phosphoribosyltransferase (299 aa).

It belongs to the ATP phosphoribosyltransferase family. Long subfamily. As to quaternary structure, equilibrium between an active dimeric form, an inactive hexameric form and higher aggregates. Interconversion between the various forms is largely reversible and is influenced by the natural substrates and inhibitors of the enzyme. Requires Mg(2+) as cofactor.

The protein resides in the cytoplasm. It carries out the reaction 1-(5-phospho-beta-D-ribosyl)-ATP + diphosphate = 5-phospho-alpha-D-ribose 1-diphosphate + ATP. The protein operates within amino-acid biosynthesis; L-histidine biosynthesis; L-histidine from 5-phospho-alpha-D-ribose 1-diphosphate: step 1/9. Feedback inhibited by histidine. Functionally, catalyzes the condensation of ATP and 5-phosphoribose 1-diphosphate to form N'-(5'-phosphoribosyl)-ATP (PR-ATP). Has a crucial role in the pathway because the rate of histidine biosynthesis seems to be controlled primarily by regulation of HisG enzymatic activity. This Klebsiella pneumoniae (strain 342) protein is ATP phosphoribosyltransferase.